The following is a 194-amino-acid chain: Type II methyltransferase M.MjaVI (194 aa).

It belongs to the N(4)/N(6)-methyltransferase family. N(4) subfamily.

It carries out the reaction a 2'-deoxycytidine in DNA + S-adenosyl-L-methionine = an N(4)-methyl-2'-deoxycytidine in DNA + S-adenosyl-L-homocysteine + H(+). A beta subtype methylase that recognizes the double-stranded sequence 5'-CCGG-3', methylates C-1 on both strands, and protects the DNA from cleavage by the MjaVI endonuclease. This chain is Type II methyltransferase M.MjaVI (mjaVIM), found in Methanocaldococcus jannaschii (strain ATCC 43067 / DSM 2661 / JAL-1 / JCM 10045 / NBRC 100440) (Methanococcus jannaschii).